Here is a 281-residue protein sequence, read N- to C-terminus: Glyceraldehyde dehydrogenase medium chain (281 aa).

Residues 1-176 form the FAD-binding PCMH-type domain; the sequence is MYPPEFSYVR…TQIEVPVLDG (176 aa). Residues 31–35 and 110–114 each bind FAD; these read AGGQS and TIGGA.

Heterotrimer composed of a large chain (CutA), a medium chain (CutB) and a small chain (CutC). Requires FAD as cofactor.

Its subcellular location is the cytoplasm. It catalyses the reaction D-glyceraldehyde + A + H2O = (R)-glycerate + AH2 + H(+). Component of the glyceraldehyde dehydrogenase which is involved the nonphosphorylated Entner-Doudoroff pathway. Catalyzes the oxidation of D-glyceraldehyde to yield glycerate. When the artificial electron acceptor 2,6-dichlorophenol-indophenol (Cl2Ind) is used, the enzyme shows a broad substrate range (glyceraldehyde-3-phosphate, formaldehyde, acetaldehyde, propionaldehyde and isobutyraldehyde), but is most active with D-glyceraldehyde. It is not known which acceptor is utilized in vivo. This chain is Glyceraldehyde dehydrogenase medium chain (cutB), found in Sulfolobus acidocaldarius (strain ATCC 33909 / DSM 639 / JCM 8929 / NBRC 15157 / NCIMB 11770).